Here is a 381-residue protein sequence, read N- to C-terminus: G-protein coupled receptor homolog Q2/3L (381 aa).

The Extracellular segment spans residues 1–91; that stretch reads MNYTLSTVSS…HCDDGVDTTS (91 aa). Asn2, Asn15, Asn19, Asn41, Asn50, Asn56, and Asn62 each carry an N-linked (GlcNAc...) asparagine; by host glycan. A helical transmembrane segment spans residues 92–112; it reads FGLITLYSTIFFLGLFGNIIV. At 113-126 the chain is on the cytoplasmic side; that stretch reads LTVLRKYKIKTIQD. The chain crosses the membrane as a helical span at residues 127 to 147; that stretch reads MFLLNLTLSDLIFVLVFPFNL. The Extracellular segment spans residues 148–165; sequence YDSIAKQWSLGDCLCKFK. The helical transmembrane segment at 166–186 threads the bilayer; that stretch reads AMFYFVGFYNSMSFITLMSID. Over 187-206 the chain is Cytoplasmic; it reads RYLAVVHPVKSMPIRTKRYG. The chain crosses the membrane as a helical span at residues 207-227; sequence IVLSMVVWIVSTIESFPIMLF. Topologically, residues 228-251 are extracellular; it reads YETKKVYGITYCHVFYNDNAKIWK. Residues 252–272 traverse the membrane as a helical segment; it reads LFINFEINIFGMIIPLTILLY. At 273–294 the chain is on the cytoplasmic side; the sequence is CYYKILNTLKTSQTKNKKAIKM. A helical transmembrane segment spans residues 295 to 315; sequence VFLIVICSVLFLLPFSVTVFV. Residues 316–336 are Extracellular-facing; the sequence is SSLYLLNVFSGCMALRFVNLA. The chain crosses the membrane as a helical span at residues 337 to 357; it reads VHVAEIVSLCHCFINPLIYAF. At 358 to 381 the chain is on the cytoplasmic side; sequence CSREFTKKLLRLRTTSSAGSISIG.

The protein belongs to the G-protein coupled receptor 1 family.

The protein resides in the host cell membrane. Putative chemokine receptor. In Ovis aries (Sheep), this protein is G-protein coupled receptor homolog Q2/3L.